We begin with the raw amino-acid sequence, 3387 residues long: Genome polyprotein (3387 aa).

At 1–100 (MNQRKKVARP…LNILNGRKRS (100 aa)) the chain is on the cytoplasmic side. The hydrophobic; homodimerization of capsid protein C stretch occupies residues 36-71 (LFSGKGPLRMVLAFITFLRVLSIPPTAGILKRWGQL). Positions 100 to 113 (STITLLCLIPTVMA) are cleaved as a propeptide — ER anchor for the capsid protein C, removed in mature form by serine protease NS3. A helical transmembrane segment spans residues 101–117 (TITLLCLIPTVMAFHLS). The Extracellular segment spans residues 118–237 (TRDGEPLMIV…GAWKHAQRVE (120 aa)). Residue Asn-182 is glycosylated (N-linked (GlcNAc...) asparagine; by host). A helical transmembrane segment spans residues 238–258 (SWILRNPGFALLAGFMAYMIG). Topologically, residues 259–265 (QTGIQRT) are cytoplasmic. A helical transmembrane segment spans residues 266-279 (VFFILMMLVAPSYG). The Extracellular portion of the chain corresponds to 280–725 (MRCVGVGNRD…HQVFGSVYTT (446 aa)). 4 disulfides stabilise this stretch: Cys-282–Cys-309, Cys-339–Cys-400, Cys-353–Cys-384, and Cys-371–Cys-395. Residue Asn-346 is glycosylated (N-linked (GlcNAc...) asparagine; by host). The tract at residues 377–390 (DRGWGNGCGLFGKG) is fusion peptide. N-linked (GlcNAc...) asparagine; by host glycosylation occurs at Asn-432. 2 cysteine pairs are disulfide-bonded: Cys-464–Cys-564 and Cys-581–Cys-612. Residues 726–746 (MFGGVSWMVRILIGLLVLWIG) form a helical membrane-spanning segment. The Cytoplasmic segment spans residues 747 to 753 (TNSRNTS). Residues 754 to 774 (MAMSCIAVGGITLFLGFTVHA) form a helical membrane-spanning segment. At 775–1194 (DMGCAVSWSG…MLGDTMSGRM (420 aa)) the chain is on the extracellular side. Disulfide bonds link Cys-778–Cys-789, Cys-829–Cys-917, Cys-953–Cys-997, Cys-1054–Cys-1103, Cys-1065–Cys-1087, and Cys-1086–Cys-1090. N-linked (GlcNAc...) asparagine; by host glycosylation is found at Asn-904 and Asn-981. A helical transmembrane segment spans residues 1195–1218 (GGQIHLAIMAVFKMSPGYVLGIFL). The Lumenal segment spans residues 1219–1224 (RKLTSR). The chain crosses the membrane as a helical span at residues 1225 to 1243 (ETALMVIGMAMTTVLSIPH). Residues 1244–1267 (DLMEFIDGISLGLILLKMVTHFDN) lie on the Cytoplasmic side of the membrane. A helical transmembrane segment spans residues 1268 to 1288 (TQVGTLALSLTFIKSTMPLVM). Residue Ala-1289 is a topological domain, lumenal. A helical membrane pass occupies residues 1290–1308 (WRTIMAVLFVVTLIPLCRT). The Lumenal portion of the chain corresponds to 1309–1316 (SCLQKQSH). The chain crosses the membrane as a helical span at residues 1317–1337 (WVEITALILGAQALPVYLMTL). At 1338-1345 (MKGASKRS) the chain is on the cytoplasmic side. A helical transmembrane segment spans residues 1346–1366 (WPLNEGIMAVGLVSLLGSALL). Residues 1367-1369 (KND) are Lumenal-facing. The helical transmembrane segment at 1370-1390 (VPLAGPMVAGGLLLAAYVMSG) threads the bilayer. Residues 1391-1437 (SSADLSLEKAANVQWDEMADITGSSPIIEVKQDEDGSFSIRDVEETN) are Cytoplasmic-facing. Residues 1397–1436 (LEKAANVQWDEMADITGSSPIIEVKQDEDGSFSIRDVEET) form an interacts with and activates NS3 protease region. An intramembrane region (helical) is located at residues 1438–1458 (MITLLVKLALITVSGLYPLAI). At 1459–2143 (PVTMTLWYMW…QHALNELPES (685 aa)) the chain is on the cytoplasmic side. A Peptidase S7 domain is found at 1475–1652 (SGALWDVPSP…ERIGEPDYEV (178 aa)). Active-site charge relay system; for serine protease NS3 activity residues include His-1525, Asp-1549, and Ser-1609. The 157-residue stretch at 1654-1810 (EDIFRKKRLT…QSNSPIEDIE (157 aa)) folds into the Helicase ATP-binding domain. The segment at 1658 to 1661 (RKKR) is important for RNA-binding. Position 1667 to 1674 (1667 to 1674 (LHPGAGKT)) interacts with ATP. Residues 1758-1761 (DEAH) carry the DEAH box motif. Residues 1820-1987 (TGFDWITDYQ…IIPTLFGPER (168 aa)) form the Helicase C-terminal domain. Lys-1862 is modified (N6-acetyllysine; by host). A helical transmembrane segment spans residues 2144–2164 (LETLMLVALLGAMTAGIFLFF). Topologically, residues 2165–2169 (MQGKG) are lumenal. The helical intramembrane region spans 2170–2190 (IGKLSMGLIAIAVASGLLWVA). Glu-2191 is a topological domain (lumenal). Residues 2192–2212 (IQPQWIAASIILEFFLMVLLV) form a helical membrane-spanning segment. At 2213–2225 (PEPEKQRTPQDNQ) the chain is on the cytoplasmic side. Residues 2226 to 2246 (LIYVILTILTIIALVAANEMG) form a helical membrane-spanning segment. Over 2247-2270 (LIEKTKTDFGFYQAKTETTILDVD) the chain is Lumenal. Residues 2271 to 2291 (LRPASAWTLYAVATTILTPML) constitute an intramembrane region (helical). Topologically, residues 2292–2301 (RHTIENTSAN) are lumenal. Residues Asn-2297 and Asn-2301 are each glycosylated (N-linked (GlcNAc...) asparagine; by host). Residues 2302–2322 (LSLAAIANQAAVLMGLGKGWP) constitute an intramembrane region (helical). Residues 2323–2343 (LHRMDLGVPLLAMGCYSQVNP) lie on the Lumenal side of the membrane. A helical membrane pass occupies residues 2344–2364 (TTLTASLVMLLVHYAIIGPGL). The Cytoplasmic portion of the chain corresponds to 2365–2409 (QAKATREAQKRTAAGIMKNPTVDGITVIDLEPISYDPKFEKQLGQ). A helical membrane pass occupies residues 2410-2430 (VMLLVLCAGQLLLMRTTWAFC). The Lumenal segment spans residues 2431 to 2455 (EVLTLATGPILTLWEGNPGRFWNTT). Asn-2453 carries N-linked (GlcNAc...) asparagine; by host glycosylation. Residues 2456–2476 (IAVSTANIFRGSYLAGAGLAF) traverse the membrane as a helical segment. The Cytoplasmic portion of the chain corresponds to 2477–3387 (SLIKNAQTPR…SAHFESEGVL (911 aa)). The mRNA cap 0-1 NS5-type MT domain maps to 2489-2751 (TGTTGETLGE…DADLGAGTRS (263 aa)). An S-adenosyl-L-methionine-binding site is contributed by Ser-2543. Ser-2543 carries the post-translational modification Phosphoserine. The active-site For 2'-O-MTase activity is the Lys-2548. The short motif at 2564-2567 (VVDL) is the SUMO-interacting motif element. S-adenosyl-L-methionine-binding residues include Gly-2573, Trp-2574, Thr-2591, Lys-2592, Asp-2618, and Val-2619. The active-site For 2'-O-MTase activity is the Asp-2633. Position 2634 (Ile-2634) interacts with S-adenosyl-L-methionine. Residues Lys-2668 and Glu-2704 each act as for 2'-O-MTase activity in the active site. An S-adenosyl-L-methionine-binding site is contributed by Tyr-2706. Residues Glu-2925, His-2929, Cys-2934, and Cys-2937 each contribute to the Zn(2+) site. The RdRp catalytic domain maps to 3016-3166 (LIYADDTAGW…PLDERFSTSL (151 aa)). His-3200, Cys-3216, and Cys-3335 together coordinate Zn(2+).

In the N-terminal section; belongs to the class I-like SAM-binding methyltransferase superfamily. mRNA cap 0-1 NS5-type methyltransferase family. As to quaternary structure, homodimer. Interacts (via N-terminus) with host EXOC1 (via C-terminus); this interaction results in EXOC1 degradation through the proteasome degradation pathway. Forms heterodimers with envelope protein E in the endoplasmic reticulum and Golgi. In terms of assembly, homodimer; in the endoplasmic reticulum and Golgi. Interacts with protein prM. Interacts with non-structural protein 1. As to quaternary structure, homodimer; Homohexamer when secreted. Interacts with envelope protein E. Interacts (via N-terminus) with serine protease NS3. In terms of assembly, forms a heterodimer with serine protease NS3. May form homooligomers. As to quaternary structure, forms a heterodimer with NS2B. Interacts with NS4B. Interacts with unphosphorylated RNA-directed RNA polymerase NS5; this interaction stimulates RNA-directed RNA polymerase NS5 guanylyltransferase activity. Interacts with host SHFL. Interacts with host MAVS; this interaction inhibits the synthesis of IFN-beta. Interacts with host SHFL. Interacts with host AUP1; the interaction occurs in the presence of Dengue virus NS4B and induces lipophagy which facilitates production of virus progeny particles. In terms of assembly, interacts with serine protease NS3. As to quaternary structure, homodimer. Interacts with host STAT2; this interaction inhibits the phosphorylation of the latter, and, when all viral proteins are present (polyprotein), targets STAT2 for degradation. Interacts with serine protease NS3. Interacts with host PAF1 complex; the interaction may prevent the recruitment of the PAF1 complex to interferon-responsive genes, and thus reduces the immune response. Post-translationally, specific enzymatic cleavages in vivo yield mature proteins. Cleavages in the lumen of endoplasmic reticulum are performed by host signal peptidase, whereas cleavages in the cytoplasmic side are performed by serine protease NS3. Signal cleavage at the 2K-4B site requires a prior NS3 protease-mediated cleavage at the 4A-2K site. Cleaved in post-Golgi vesicles by a host furin, releasing the mature small envelope protein M, and peptide pr. This cleavage is incomplete as up to 30% of viral particles still carry uncleaved prM. In terms of processing, N-glycosylated. Post-translationally, N-glycosylated. The excreted form is glycosylated and this is required for efficient secretion of the protein from infected cells. Acetylated by host KAT5. Acetylation modulates NS3 RNA-binding and unwinding activities and plays an important positive role for viral replication. In terms of processing, sumoylation of RNA-directed RNA polymerase NS5 increases NS5 protein stability allowing proper viral RNA replication. Post-translationally, phosphorylated on serines residues. This phosphorylation may trigger NS5 nuclear localization.

The protein localises to the virion. Its subcellular location is the host nucleus. It is found in the host cytoplasm. The protein resides in the host perinuclear region. It localises to the secreted. The protein localises to the virion membrane. Its subcellular location is the host endoplasmic reticulum membrane. It is found in the host mitochondrion. It carries out the reaction Selective hydrolysis of -Xaa-Xaa-|-Yaa- bonds in which each of the Xaa can be either Arg or Lys and Yaa can be either Ser or Ala.. The enzyme catalyses RNA(n) + a ribonucleoside 5'-triphosphate = RNA(n+1) + diphosphate. The catalysed reaction is a ribonucleoside 5'-triphosphate + H2O = a ribonucleoside 5'-diphosphate + phosphate + H(+). It catalyses the reaction ATP + H2O = ADP + phosphate + H(+). It carries out the reaction a 5'-end (5'-triphosphoguanosine)-ribonucleoside in mRNA + S-adenosyl-L-methionine = a 5'-end (N(7)-methyl 5'-triphosphoguanosine)-ribonucleoside in mRNA + S-adenosyl-L-homocysteine. The enzyme catalyses a 5'-end (N(7)-methyl 5'-triphosphoguanosine)-ribonucleoside in mRNA + S-adenosyl-L-methionine = a 5'-end (N(7)-methyl 5'-triphosphoguanosine)-(2'-O-methyl-ribonucleoside) in mRNA + S-adenosyl-L-homocysteine + H(+). Functionally, plays a role in virus budding by binding to the cell membrane and gathering the viral RNA into a nucleocapsid that forms the core of a mature virus particle. During virus entry, may induce genome penetration into the host cytoplasm after hemifusion induced by the surface proteins. Can migrate to the cell nucleus where it modulates host functions. Overcomes the anti-viral effects of host EXOC1 by sequestering and degrading the latter through the proteasome degradation pathway. Inhibits RNA silencing by interfering with host Dicer. Its function is as follows. Prevents premature fusion activity of envelope proteins in trans-Golgi by binding to envelope protein E at pH6.0. After virion release in extracellular space, gets dissociated from E dimers. In terms of biological role, acts as a chaperone for envelope protein E during intracellular virion assembly by masking and inactivating envelope protein E fusion peptide. prM is the only viral peptide matured by host furin in the trans-Golgi network probably to avoid catastrophic activation of the viral fusion activity in acidic Golgi compartment prior to virion release. prM-E cleavage is inefficient, and many virions are only partially matured. These uncleaved prM would play a role in immune evasion. Functionally, may play a role in virus budding. Exerts cytotoxic effects by activating a mitochondrial apoptotic pathway through M ectodomain. May display a viroporin activity. Binds to host cell surface receptor and mediates fusion between viral and cellular membranes. Envelope protein is synthesized in the endoplasmic reticulum in the form of heterodimer with protein prM. They play a role in virion budding in the ER, and the newly formed immature particle is covered with 60 spikes composed of heterodimer between precursor prM and envelope protein E. The virion is transported to the Golgi apparatus where the low pH causes dissociation of PrM-E heterodimers and formation of E homodimers. prM-E cleavage is inefficient, and many virions are only partially matured. These uncleaved prM would play a role in immune evasion. Its function is as follows. Involved in immune evasion, pathogenesis and viral replication. Once cleaved off the polyprotein, is targeted to three destinations: the viral replication cycle, the plasma membrane and the extracellular compartment. Essential for viral replication. Required for formation of the replication complex and recruitment of other non-structural proteins to the ER-derived membrane structures. Excreted as a hexameric lipoparticle that plays a role against host immune response. Antagonizing the complement function. Binds to the host macrophages and dendritic cells. Inhibits signal transduction originating from Toll-like receptor 3 (TLR3). In terms of biological role, disrupts the host endothelial glycocalyx layer of host pulmonary microvascular endothelial cells, inducing degradation of sialic acid and shedding of heparan sulfate proteoglycans. NS1 induces expression of sialidases, heparanase, and activates cathepsin L, which activates heparanase via enzymatic cleavage. These effects are probably linked to the endothelial hyperpermeability observed in severe dengue disease. Functionally, component of the viral RNA replication complex that functions in virion assembly and antagonizes the host immune response. Required cofactor for the serine protease function of NS3. May have membrane-destabilizing activity and form viroporins. Its function is as follows. Displays three enzymatic activities: serine protease, NTPase and RNA helicase. NS3 serine protease, in association with NS2B, performs its autocleavage and cleaves the polyprotein at dibasic sites in the cytoplasm: C-prM, NS2A-NS2B, NS2B-NS3, NS3-NS4A, NS4A-2K and NS4B-NS5. NS3 RNA helicase binds RNA and unwinds dsRNA in the 3' to 5' direction. In terms of biological role, regulates the ATPase activity of the NS3 helicase activity. NS4A allows NS3 helicase to conserve energy during unwinding. Plays a role in the inhibition of the host innate immune response. Interacts with host MAVS and thereby prevents the interaction between RIGI and MAVS. In turn, IFN-beta production is impaired. Interacts with host AUP1 which mediates induction of lipophagy in host cells and facilitates production of virus progeny particles. Functionally, functions as a signal peptide for NS4B and is required for the interferon antagonism activity of the latter. Induces the formation of ER-derived membrane vesicles where the viral replication takes place. Inhibits interferon (IFN)-induced host STAT1 phosphorylation and nuclear translocation, thereby preventing the establishment of cellular antiviral state by blocking the IFN-alpha/beta pathway. Its function is as follows. Replicates the viral (+) and (-) RNA genome, and performs the capping of genomes in the cytoplasm. NS5 methylates viral RNA cap at guanine N-7 and ribose 2'-O positions. Besides its role in RNA genome replication, also prevents the establishment of cellular antiviral state by blocking the interferon-alpha/beta (IFN-alpha/beta) signaling pathway. Inhibits host TYK2 and STAT2 phosphorylation, thereby preventing activation of JAK-STAT signaling pathway. May reduce immune responses by preventing the recruitment of the host PAF1 complex to interferon-responsive genes. The sequence is that of Genome polyprotein from Dengue virus type 4 (strain Thailand/0348/1991) (DENV-4).